The primary structure comprises 295 residues: Hydroxylase/desaturase efuI (295 aa).

It belongs to the asaB hydroxylase/desaturase family.

It participates in secondary metabolite biosynthesis; terpenoid biosynthesis. Hydroxylase/desaturase; part of the gene cluster that mediates the biosynthesis of enfumafungin, a glycosylated fernene-type triterpenoid with potent antifungal activity, mediated by its interaction with beta-1,3-glucan synthase and the fungal cell wall. The pathway begins with the terpene cyclase-glycosyl transferase fusion protein that most likely uses 2,3-oxidosqualene as substrate and catalyzes glycosylation immediately after cyclization. The fernene glycoside then could be processed by the desaturase efuI which catalyzes isomerization of a double bond established by efuA to form the core structure. The latter would then undergo a series of hydroxylations in unknown order at C-2, C-19, C-23 and C-25, which would be catalyzed by two of the three cytochrome P450 monooxygenases efuB, efuG or efuH. The hydroxy-group at C-25 becomes oxidized by the dehydrogenase efuE to enable a spontaneous, non-enzymatic hemiacetal formation with C-23. After hydroxylation at C-2, acetylation by the acetyltransferase efuC takes place. The final steps in enfumafungin biosynthesis require expansion of the 5-membered ring by lactonization via a Baeyer-Villiger reaction mediated by one of the BGC's cytochrome P450 monooxygenases (efuB, efuG or efuH) followed by ring cleavage. This type of reaction would establish a double bond between C-20 and C-21 which could be reduced by the reductase efuL to form the final product. This chain is Hydroxylase/desaturase efuI, found in Hormonema carpetanum.